A 163-amino-acid chain; its full sequence is RxLR effector protein PITG_13625 (163 aa).

A signal peptide spans 1 to 23; the sequence is MKVSKAIVALAALCMALLAPAAG. The RxLR-dEER signature appears at 37 to 52; the sequence is RHLRQESAELATTPEE.

Belongs to the RxLR effector family.

It is found in the secreted. The protein resides in the host cell membrane. Functionally, effector that enhances P.infestans colonization of Nicotiana benthamiana leaves. The sequence is that of RxLR effector protein PITG_13625 from Phytophthora infestans (strain T30-4) (Potato late blight agent).